A 220-amino-acid polypeptide reads, in one-letter code: N-(5'-phosphoribosyl)anthranilate isomerase (220 aa).

It belongs to the TrpF family.

It carries out the reaction N-(5-phospho-beta-D-ribosyl)anthranilate = 1-(2-carboxyphenylamino)-1-deoxy-D-ribulose 5-phosphate. Its pathway is amino-acid biosynthesis; L-tryptophan biosynthesis; L-tryptophan from chorismate: step 3/5. The polypeptide is N-(5'-phosphoribosyl)anthranilate isomerase (Xylella fastidiosa (strain M12)).